Reading from the N-terminus, the 1001-residue chain is Open rectifier potassium channel protein 1 (1001 aa).

Topologically, residues 1-6 (MSPNRW) are cytoplasmic. A helical membrane pass occupies residues 7–27 (ILLLIFYISYLMFGAAIYYHI). N-linked (GlcNAc...) asparagine glycosylation occurs at Asn58. The pore-forming intramembrane region spans 95–111 (AFFFAFTVCSTVGYGNI). A helical transmembrane segment spans residues 120–140 (MIMIAYSVIGIPVNGILFAGL). At 141–170 (GEYFGRTFEAIYRRYKKYKMSTDMHYVPPQ) the chain is on the cytoplasmic side. Residues 171-191 (LGLITTVVIALIPGIALFLLL) traverse the membrane as a helical segment. Residues 208–224 (LYYSYVTTTTIGFGDYV) constitute an intramembrane region (pore-forming). A helical transmembrane segment spans residues 244-264 (IFVIVWFIFSLGYLVMIMTFI). Residues 265–1001 (TRGLQSKKLA…TGSSGAPAEK (737 aa)) are Cytoplasmic-facing. Phosphoserine occurs at positions 332, 373, 562, and 565. Residues 591–668 (SQSYLRNGRG…QAPSARRGSM (78 aa)) are disordered. Phosphoserine occurs at positions 685, 691, and 715. Disordered regions lie at residues 768-795 (GGAAGGGGISRGSRKQRKMGNAGLEPPQ) and 830-1001 (SPTG…PAEK). Residues 832–841 (TGGAATAPAA) show a composition bias toward low complexity. The segment covering 855–873 (AANQSQITAGPSNAPTVQS) has biased composition (polar residues). Residues 911-926 (RRLSLRPSPLARELSP) are compositionally biased toward low complexity. A compositionally biased stretch (polar residues) spans 961–983 (RPSTSSTHSPLSRIVQISQAQRK). The segment covering 984–1001 (SSMPSAAATGSSGAPAEK) has biased composition (low complexity).

It belongs to the two pore domain potassium channel (TC 1.A.1.8) family. Widespread expression in adult, strongest expression in muscle, brain and ovary. Also present at low levels in larva and embryo.

It is found in the membrane. Background potassium channel. Rectification is dependent on external potassium concentration. Acts as an outwardly rectifying channel but as external potassium levels increase, this is reversed. This Drosophila melanogaster (Fruit fly) protein is Open rectifier potassium channel protein 1 (Ork1).